Here is a 460-residue protein sequence, read N- to C-terminus: Chromosomal replication initiator protein DnaA (460 aa).

The tract at residues 1–84 is domain I, interacts with DnaA modulators; it reads MAVSLWQQCI…RFDIGSRPSA (84 aa). The segment at 84–123 is domain II; it reads AKKPEPAPVAAVRVPNPQTKASVGTSFNTTEPVANTNHRS. Residues 103 to 123 are disordered; the sequence is KASVGTSFNTTEPVANTNHRS. The domain III, AAA+ region stretch occupies residues 124-340; sequence NINPTYQFDN…GALNRVIANA (217 aa). ATP contacts are provided by glycine 168, glycine 170, lysine 171, and threonine 172. The domain IV, binds dsDNA stretch occupies residues 341-460; it reads NFTGRPITID…YANLIRTLSS (120 aa).

This sequence belongs to the DnaA family. In terms of assembly, oligomerizes as a right-handed, spiral filament on DNA at oriC.

It localises to the cytoplasm. In terms of biological role, plays an essential role in the initiation and regulation of chromosomal replication. ATP-DnaA binds to the origin of replication (oriC) to initiate formation of the DNA replication initiation complex once per cell cycle. Binds the DnaA box (a 9 base pair repeat at the origin) and separates the double-stranded (ds)DNA. Forms a right-handed helical filament on oriC DNA; dsDNA binds to the exterior of the filament while single-stranded (ss)DNA is stabiized in the filament's interior. The ATP-DnaA-oriC complex binds and stabilizes one strand of the AT-rich DNA unwinding element (DUE), permitting loading of DNA polymerase. After initiation quickly degrades to an ADP-DnaA complex that is not apt for DNA replication. Binds acidic phospholipids. The protein is Chromosomal replication initiator protein DnaA of Shewanella sp. (strain MR-4).